The sequence spans 902 residues: Respiratory nitrate reductase alpha chain (902 aa).

H29, C33, and C37 together coordinate [4Fe-4S] cluster.

Belongs to the prokaryotic molybdopterin-containing oxidoreductase family. Heterotrimer composed of an alpha, a beta and a gamma chain. Alpha and beta are catalytic chains; gamma chains are involved in binding the enzyme complex to the cytoplasmic membrane. Requires [4Fe-4S] cluster as cofactor. Mo-bis(molybdopterin guanine dinucleotide) is required as a cofactor.

It localises to the cell membrane. It is found in the cytoplasm. It catalyses the reaction nitrate + a quinol = a quinone + nitrite + H2O. With respect to regulation, inhibited by micromolar concentrations of azide. Its function is as follows. The nitrate reductase enzyme complex allows Bradyrhizobium sp. USDA 3045 to use nitrate as an electron acceptor during anaerobic growth. The alpha chain is the actual site of nitrate reduction. The protein is Respiratory nitrate reductase alpha chain (narG) of Bradyrhizobium sp.